A 170-amino-acid polypeptide reads, in one-letter code: Lipoprotein signal peptidase (170 aa).

3 helical membrane passes run 12–32 (WYWV…WVLA), 67–87 (WQRW…TVWL), and 93–113 (SLWK…GNLI). Residues aspartate 123 and aspartate 141 contribute to the active site. Residues 137–157 (FNIADSAIFIGAVLIIWDSFF) traverse the membrane as a helical segment.

This sequence belongs to the peptidase A8 family.

It is found in the cell inner membrane. It catalyses the reaction Release of signal peptides from bacterial membrane prolipoproteins. Hydrolyzes -Xaa-Yaa-Zaa-|-(S,diacylglyceryl)Cys-, in which Xaa is hydrophobic (preferably Leu), and Yaa (Ala or Ser) and Zaa (Gly or Ala) have small, neutral side chains.. It participates in protein modification; lipoprotein biosynthesis (signal peptide cleavage). This protein specifically catalyzes the removal of signal peptides from prolipoproteins. The chain is Lipoprotein signal peptidase from Shewanella sp. (strain MR-4).